We begin with the raw amino-acid sequence, 149 residues long: Large ribosomal subunit protein uL13 (149 aa).

It belongs to the universal ribosomal protein uL13 family. Part of the 50S ribosomal subunit.

Functionally, this protein is one of the early assembly proteins of the 50S ribosomal subunit, although it is not seen to bind rRNA by itself. It is important during the early stages of 50S assembly. The sequence is that of Large ribosomal subunit protein uL13 from Bifidobacterium longum subsp. infantis (strain ATCC 15697 / DSM 20088 / JCM 1222 / NCTC 11817 / S12).